A 533-amino-acid chain; its full sequence is Ribonuclease Y (533 aa).

The tract at residues 16 to 41 (VERIRRRAEQDAAEQTERVRREAEQI) is disordered. Basic and acidic residues predominate over residues 22 to 41 (RAEQDAAEQTERVRREAEQI). The KH domain occupies 223–289 (VVSVLHLPSD…RITLTALVSD (67 aa)). One can recognise an HD domain in the interval 349–442 (VLAHLVESAH…TQAADQISGG (94 aa)).

This sequence belongs to the RNase Y family.

Endoribonuclease that initiates mRNA decay. The protein is Ribonuclease Y of Parafrankia sp. (strain EAN1pec).